Reading from the N-terminus, the 415-residue chain is Serine hydroxymethyltransferase (415 aa).

(6S)-5,6,7,8-tetrahydrofolate-binding positions include L119 and 123 to 125 (GHL). K228 is subject to N6-(pyridoxal phosphate)lysine. 353 to 355 (SPF) is a binding site for (6S)-5,6,7,8-tetrahydrofolate.

This sequence belongs to the SHMT family. As to quaternary structure, homodimer. Requires pyridoxal 5'-phosphate as cofactor.

It localises to the cytoplasm. It carries out the reaction (6R)-5,10-methylene-5,6,7,8-tetrahydrofolate + glycine + H2O = (6S)-5,6,7,8-tetrahydrofolate + L-serine. The protein operates within one-carbon metabolism; tetrahydrofolate interconversion. Its pathway is amino-acid biosynthesis; glycine biosynthesis; glycine from L-serine: step 1/1. Catalyzes the reversible interconversion of serine and glycine with tetrahydrofolate (THF) serving as the one-carbon carrier. Also exhibits THF-independent aldolase activity toward beta-hydroxyamino acids, producing glycine and aldehydes, via a retro-aldol mechanism. The protein is Serine hydroxymethyltransferase of Halorubrum lacusprofundi (strain ATCC 49239 / DSM 5036 / JCM 8891 / ACAM 34).